The following is a 349-amino-acid chain: Protein MULTIPLE CHLOROPLAST DIVISION SITE 1 (349 aa).

The N-terminal 52 residues, 1–52 (MASIDSLQFHSLCNLQSSIGRAKLQNPSSLVIFRRRPVNLNWVQFETKGSFV), are a transit peptide targeting the chloroplast. The Chloroplast intermembrane segment spans residues 53–116 (CKAIGDSSTP…VVFLMKKCSV (64 aa)). Residues 117-139 (NSIWIGVCITATVLVAAIRAYVV) form a helical membrane-spanning segment. Over 140–349 (RKSRDNQRAG…NSSSEETHKS (210 aa)) the chain is Stromal. The tract at residues 315 to 349 (QRPYKFSAKLEGENIQKNSQENHTGNSSSEETHKS) is disordered. The segment covering 329-343 (IQKNSQENHTGNSSS) has biased composition (polar residues).

As to quaternary structure, interacts with MIND1. Interacts with ARC6 in the chloroplast stroma and binds to FtsZ2-1 in an ARC6-dependent manner.

Its subcellular location is the plastid. The protein localises to the chloroplast inner membrane. Functionally, required for chloroplast division. Together with MIND1 and ARC3, regulates FtsZ ring positioning in chloroplasts in an ARC6-dependent manner. Determines the site of chloroplast division in concert with MIND1. Not directly involved in ring formation, but required for MIND1 and MINE1 localization to regulate FtsZ ring formation during plastidial constriction. This is Protein MULTIPLE CHLOROPLAST DIVISION SITE 1 from Arabidopsis thaliana (Mouse-ear cress).